Here is a 127-residue protein sequence, read N- to C-terminus: Small ribosomal subunit protein uS13 (127 aa).

The segment at 92 to 127 is disordered; it reads HRQGLPVRGQRTRTNARTRRGRRLTVAGKKKAPSKK. Over residues 101 to 127 the composition is skewed to basic residues; it reads QRTRTNARTRRGRRLTVAGKKKAPSKK.

This sequence belongs to the universal ribosomal protein uS13 family. Part of the 30S ribosomal subunit. Forms a loose heterodimer with protein S19. Forms two bridges to the 50S subunit in the 70S ribosome.

Located at the top of the head of the 30S subunit, it contacts several helices of the 16S rRNA. In the 70S ribosome it contacts the 23S rRNA (bridge B1a) and protein L5 of the 50S subunit (bridge B1b), connecting the 2 subunits; these bridges are implicated in subunit movement. Contacts the tRNAs in the A and P-sites. This Gloeothece citriformis (strain PCC 7424) (Cyanothece sp. (strain PCC 7424)) protein is Small ribosomal subunit protein uS13.